Reading from the N-terminus, the 346-residue chain is Protein RecA (346 aa).

64 to 71 (GPESSGKT) is an ATP binding site.

Belongs to the RecA family.

The protein resides in the cytoplasm. Functionally, can catalyze the hydrolysis of ATP in the presence of single-stranded DNA, the ATP-dependent uptake of single-stranded DNA by duplex DNA, and the ATP-dependent hybridization of homologous single-stranded DNAs. It interacts with LexA causing its activation and leading to its autocatalytic cleavage. This is Protein RecA from Bacillus pumilus (strain SAFR-032).